Here is a 255-residue protein sequence, read N- to C-terminus: 1-(5-phosphoribosyl)-5-[(5-phosphoribosylamino)methylideneamino] imidazole-4-carboxamide isomerase (255 aa).

The Proton acceptor role is filled by Asp-8. Asp-129 functions as the Proton donor in the catalytic mechanism.

This sequence belongs to the HisA/HisF family.

It is found in the cytoplasm. It carries out the reaction 1-(5-phospho-beta-D-ribosyl)-5-[(5-phospho-beta-D-ribosylamino)methylideneamino]imidazole-4-carboxamide = 5-[(5-phospho-1-deoxy-D-ribulos-1-ylimino)methylamino]-1-(5-phospho-beta-D-ribosyl)imidazole-4-carboxamide. The protein operates within amino-acid biosynthesis; L-histidine biosynthesis; L-histidine from 5-phospho-alpha-D-ribose 1-diphosphate: step 4/9. This is 1-(5-phosphoribosyl)-5-[(5-phosphoribosylamino)methylideneamino] imidazole-4-carboxamide isomerase from Gloeobacter violaceus (strain ATCC 29082 / PCC 7421).